A 282-amino-acid polypeptide reads, in one-letter code: Bifunctional protein FolD (282 aa).

NADP(+) is bound at residue 163 to 165 (GRS).

It belongs to the tetrahydrofolate dehydrogenase/cyclohydrolase family. Homodimer.

It catalyses the reaction (6R)-5,10-methylene-5,6,7,8-tetrahydrofolate + NADP(+) = (6R)-5,10-methenyltetrahydrofolate + NADPH. The catalysed reaction is (6R)-5,10-methenyltetrahydrofolate + H2O = (6R)-10-formyltetrahydrofolate + H(+). It functions in the pathway one-carbon metabolism; tetrahydrofolate interconversion. Its function is as follows. Catalyzes the oxidation of 5,10-methylenetetrahydrofolate to 5,10-methenyltetrahydrofolate and then the hydrolysis of 5,10-methenyltetrahydrofolate to 10-formyltetrahydrofolate. This chain is Bifunctional protein FolD, found in Leuconostoc citreum (strain KM20).